The following is a 487-amino-acid chain: V-type proton ATPase subunit B3 (487 aa).

Belongs to the ATPase alpha/beta chains family. In terms of assembly, V-ATPase is a heteromultimeric enzyme composed of a peripheral catalytic V1 complex (components A to H) attached to an integral membrane V0 proton pore complex (components: a, c, c'', d and e).

The protein resides in the vacuole membrane. In terms of biological role, non-catalytic subunit of the peripheral V1 complex of vacuolar ATPase. V-ATPase is responsible for acidifying a variety of intracellular compartments in eukaryotic cells. The protein is V-type proton ATPase subunit B3 (VHA-B3) of Arabidopsis thaliana (Mouse-ear cress).